We begin with the raw amino-acid sequence, 374 residues long: 4-hydroxybenzoate polyprenyltransferase, mitochondrial (374 aa).

A mitochondrion-targeting transit peptide spans 1 to 34; it reads MLRWGGAGLARGLRAVRSAWLRGPRGLPLALVRS. At 35-83 the chain is on the mitochondrial matrix side; it reads AGVPGARDRRAPAPGTQRGRALSLSAAAVVNSAPRPLQPYLRLMRLDKP. A helical membrane pass occupies residues 84-104; sequence IGTWLLYLPCTWSIGLAADPG. The Mitochondrial intermembrane portion of the chain corresponds to 105–108; it reads CFPD. The chain crosses the membrane as a helical span at residues 109 to 129; sequence WYMLSLFGTGAILMRGAGCTI. Residues 130-148 are Mitochondrial matrix-facing; it reads NDMWDRDFDKKVTRTANRP. Residues 149–169 traverse the membrane as a helical segment; the sequence is IAAGDISTFQSFVFLGGQLTL. Topologically, residues 170–172 are mitochondrial intermembrane; sequence ALG. Residues 173–193 traverse the membrane as a helical segment; sequence VLLCLNYYSIAMGAASLLLVV. Over 194–200 the chain is Mitochondrial matrix; the sequence is TYPLVKR. The helical transmembrane segment at 201–221 threads the bilayer; the sequence is ITFWPQLALGLTFNWGALLGW. At 222–230 the chain is on the mitochondrial intermembrane side; sequence SAVKGSCDP. The chain crosses the membrane as a helical span at residues 231 to 251; that stretch reads AVCLPLYFSGVMWTLIYDTIY. The Mitochondrial matrix segment spans residues 252-277; that stretch reads AHQDKKDDALIGLKSTALLFQENTRQ. A helical membrane pass occupies residues 278–298; it reads WLSGFGVAMVAALSLAGANNG. The Mitochondrial intermembrane segment spans residues 299–332; it reads QTVPYYAAVAAVGAHLAHQIYTVDIHRAEDCWDK. The chain crosses the membrane as a helical span at residues 333 to 353; the sequence is FTSNRTVGMLLFLGIVLGNLC. Over 354-374 the chain is Mitochondrial matrix; it reads KEKTEEAKDAEAVRVGSEQTS.

The protein belongs to the UbiA prenyltransferase family. The cofactor is Mg(2+).

The protein localises to the mitochondrion inner membrane. It catalyses the reaction an all-trans-polyprenyl diphosphate + 4-hydroxybenzoate = a 4-hydroxy-3-(all-trans-polyprenyl)benzoate + diphosphate. It carries out the reaction all-trans-decaprenyl diphosphate + 4-hydroxybenzoate = 4-hydroxy-3-(all-trans-decaprenyl)benzoate + diphosphate. The catalysed reaction is all-trans-nonaprenyl diphosphate + 4-hydroxybenzoate = 4-hydroxy-3-(all-trans-nonaprenyl)benzoate + diphosphate. Its pathway is cofactor biosynthesis; ubiquinone biosynthesis. Mediates the second step in the final reaction sequence of coenzyme Q (CoQ) biosynthesis. Catalyzes the prenylation of para-hydroxybenzoate (PHB) with an all-trans polyprenyl donor (such as all-trans-nonaprenyl diphosphate). The length of the polyprenyl side chain varies depending on the species, in humans, the side chain is comprised of 10 isoprenyls producing CoQ10 (also known as ubiquinone), whereas rodents predominantly generate CoQ9. However, this specificity is not complete, human tissues have low amounts of CoQ9 and rodent organs contain some CoQ10. Plays a central role in the biosynthesis of CoQ9. CoQ9 is a vital molecule that transports electrons from mitochondrial respiratory chain complexes. CoQs also function as cofactors for uncoupling protein and play a role as regulators of the extracellularly-induced ceramide-dependent apoptotic pathway. Regulates mitochondrial permeability transition pore (mPTP) opening and ROS production (pivotal events in cell death) in a tissue specific manner. This is 4-hydroxybenzoate polyprenyltransferase, mitochondrial from Mus musculus (Mouse).